The following is a 318-amino-acid chain: Glycine--tRNA ligase alpha subunit (318 aa).

This sequence belongs to the class-II aminoacyl-tRNA synthetase family. As to quaternary structure, tetramer of two alpha and two beta subunits.

The protein resides in the cytoplasm. The enzyme catalyses tRNA(Gly) + glycine + ATP = glycyl-tRNA(Gly) + AMP + diphosphate. The chain is Glycine--tRNA ligase alpha subunit from Chelativorans sp. (strain BNC1).